A 53-amino-acid chain; its full sequence is Conotoxin Cal6.23 (53 aa).

An N-terminal signal peptide occupies residues 1 to 22 (MKLTAVLMVAVLVLTACQLITA). Intrachain disulfides connect C25-C40, C32-C47, and C39-C51.

It belongs to the conotoxin O1 superfamily. As to expression, expressed by the venom duct.

The protein resides in the secreted. Functionally, probable neurotoxin. The chain is Conotoxin Cal6.23 from Californiconus californicus (California cone).